Here is a 1289-residue protein sequence, read N- to C-terminus: Trafficking protein particle complex II-specific subunit 120 (1289 aa).

A compositionally biased stretch (polar residues) spans Ser354–Lys365. The segment at Ser354–Ser374 is disordered. Residues Ser379 and Ser387 each carry the phosphoserine modification.

Belongs to the TRS120 family. Part of the multisubunit TRAPP (transport protein particle) II complex composed of BET3, BET5, TRS20, TRS23, TRS31, TRS33, TRS65, TRS120 and TRS130. Interacts directly with TRS65.

The protein localises to the golgi apparatus. The protein resides in the cis-Golgi network. Specific subunit of the TRAPP II complex, a highly conserved vesicle tethering complex that functions in the late Golgi as a guanine nucleotide exchanger (GEF) for the Golgi YPT1 GTPase. TRS120 plays a role in the YPT GEF activity of TRAPP II in concert with the two other TRAPP II-specific subunits TRS65 and TRS130. The polypeptide is Trafficking protein particle complex II-specific subunit 120 (TRS120) (Saccharomyces cerevisiae (strain ATCC 204508 / S288c) (Baker's yeast)).